Here is a 546-residue protein sequence, read N- to C-terminus: Cholesterol oxidase (546 aa).

A signal peptide (tat-type signal) is located at residues 1-42; it reads MTAQQHLSRRRMLGMAAFGAAALAGGTTIAAPRAAAAAKSAA. 8 residues coordinate FAD: tyrosine 57, glycine 58, glutamate 77, glycine 152, asparagine 156, glycine 157, methionine 159, and valine 287. Active-site proton acceptor residues include glutamate 398 and histidine 484. Positions 512 and 524 each coordinate FAD.

Belongs to the GMC oxidoreductase family. Monomer. The cofactor is FAD. Predicted to be exported by the Tat system. The position of the signal peptide cleavage has been experimentally proven.

It localises to the secreted. The catalysed reaction is cholesterol + O2 = cholest-5-en-3-one + H2O2. The enzyme catalyses cholest-5-en-3-one = cholest-4-en-3-one. It functions in the pathway steroid metabolism; cholesterol degradation. Functionally, bifunctional enzyme that catalyzes the oxidation and isomerization of cholesterol to cholestenone (cholest-4-en-3-one), an initial step in the cholesterol degradation process. The cholesterol degradation pathway allows the bacterium to utilize cholesterol as its sole source of carbon and energy. The chain is Cholesterol oxidase from Streptomyces sp. (strain SA-COO).